A 421-amino-acid chain; its full sequence is MSILLKGGLILYDTSYHPTRADILIEGDKIVEVKRNINKAADEVIDASHSLIIPAFINAHTHSPMVIFRGLAEDVPLMDWLQNYIWPAERKLKRKEVYWGAKLALLEMVHSGISTFVDMYFYMEEVARATLEVGLRGFLGYGMVDLEDEEKRRKEIKETEKLHEFITKLNSKLVKFILAPHAPYTCSLDCLKWVAEKSREWDSLVTIHLAETRDEIKIMEEKYGRSPVEVLKEANLLNDKLIAAHGIWLSKKDLEMLASSNVTIAHCPASNMKLGSGIFPMRDAIDEDINVALGTDGAASNNTLDIIREMRLASLLQKVNTLNPAIVKSEEIFRMATINGAKALKLKAGIIKEGYIADIAVINLKRSHLLPLHNPLATLIFSAKAGDIDTLIVSGRVIMLDGEVLTIDEEKVIDKFLGVGI.

Residues histidine 60 and histidine 62 each coordinate Zn(2+). Substrate-binding residues include glutamate 89 and histidine 181. Residue histidine 208 participates in Zn(2+) binding. Substrate is bound by residues glutamate 211 and aspartate 296. Aspartate 296 contributes to the Zn(2+) binding site.

This sequence belongs to the metallo-dependent hydrolases superfamily. MTA/SAH deaminase family. Zn(2+) is required as a cofactor.

It carries out the reaction S-adenosyl-L-homocysteine + H2O + H(+) = S-inosyl-L-homocysteine + NH4(+). The enzyme catalyses S-methyl-5'-thioadenosine + H2O + H(+) = S-methyl-5'-thioinosine + NH4(+). In terms of biological role, catalyzes the deamination of 5-methylthioadenosine and S-adenosyl-L-homocysteine into 5-methylthioinosine and S-inosyl-L-homocysteine, respectively. Is also able to deaminate adenosine. This chain is 5-methylthioadenosine/S-adenosylhomocysteine deaminase, found in Pyrococcus horikoshii (strain ATCC 700860 / DSM 12428 / JCM 9974 / NBRC 100139 / OT-3).